The following is a 652-amino-acid chain: Acetyl-coenzyme A synthetase (652 aa).

CoA contacts are provided by residues 189–192 (RGGK) and T311. ATP-binding positions include 387–389 (GEP), 411–416 (DTWWQT), D500, and R515. S523 contacts CoA. R526 provides a ligand contact to ATP. Mg(2+) contacts are provided by V537, H539, and V542. Residue R584 participates in CoA binding. K609 is modified (N6-acetyllysine).

The protein belongs to the ATP-dependent AMP-binding enzyme family. Mg(2+) is required as a cofactor. Acetylated. Deacetylation by the SIR2-homolog deacetylase activates the enzyme.

It catalyses the reaction acetate + ATP + CoA = acetyl-CoA + AMP + diphosphate. In terms of biological role, catalyzes the conversion of acetate into acetyl-CoA (AcCoA), an essential intermediate at the junction of anabolic and catabolic pathways. AcsA undergoes a two-step reaction. In the first half reaction, AcsA combines acetate with ATP to form acetyl-adenylate (AcAMP) intermediate. In the second half reaction, it can then transfer the acetyl group from AcAMP to the sulfhydryl group of CoA, forming the product AcCoA. This chain is Acetyl-coenzyme A synthetase, found in Rhizobium rhizogenes (Agrobacterium rhizogenes).